We begin with the raw amino-acid sequence, 550 residues long: (+)-germacrene D synthase (550 aa).

3 residues coordinate Mg(2+): Asp304, Asp308, and Glu455. The DDXXD motif signature appears at 304 to 308 (DDIYD).

The protein belongs to the terpene synthase family. Tpsa subfamily. Requires Mg(2+) as cofactor. Mn(2+) serves as cofactor. It depends on Co(2+) as a cofactor. Ni(2+) is required as a cofactor.

The protein localises to the cytoplasm. The catalysed reaction is (2E,6E)-farnesyl diphosphate = (+)-germacrene D + diphosphate. It functions in the pathway secondary metabolite biosynthesis; terpenoid biosynthesis. Functionally, involved in the biosynthesis of germacrene D. Can use farnesyl diphosphate as substrate, but not geranyl diphosphate. Produces mainly (+)-germacrene D along with germacrene B and a number of minor by-products. In Zingiber officinale (Ginger), this protein is (+)-germacrene D synthase.